Consider the following 136-residue polypeptide: MSARGKARSRALDVLFEAEQRSASAFDVLRARREKTDQIVNPYTLEIVEGVVSRQQAIDEFLETYSQGWSLERMPSVDRIILRIGTWELLYNDDVPDGVAVSEAVALAKTLSTDESPQFINGLLGRLQQLKPSLLA.

Belongs to the NusB family.

Functionally, involved in transcription antitermination. Required for transcription of ribosomal RNA (rRNA) genes. Binds specifically to the boxA antiterminator sequence of the ribosomal RNA (rrn) operons. In Pseudarthrobacter chlorophenolicus (strain ATCC 700700 / DSM 12829 / CIP 107037 / JCM 12360 / KCTC 9906 / NCIMB 13794 / A6) (Arthrobacter chlorophenolicus), this protein is Transcription antitermination protein NusB.